The chain runs to 562 residues: MSHQPKPLSEVEHIKTQSRLLRGSLAESLEDPVTGGLATPDTNLIKFHGSYQQDDRDVREERRQQKLEPDYSFMLRTRLPGGVCTPAQWLVMDALAREHANHTLRITTRQAFQLHGVIKDDLRPTIARINEAMMDTLAACGDVNRNVLCNPNPVDSRVHETVYQWAVRISEHLLPKTRAYYEVWLGKEKVAGGEDEPIYGATYLPRKFKAAVAVPPLNDVDVFAQDLGFIAIIEGDALVGFNVSVGGGMGATHGDAATYPRLADVVGFIPPEQTLAVAEEVVKIHRDFGDRTNRKHARLKYVLEERGVPWFTAELEKRLGFPLQPARPFAFEHNGDRFGWTEGHDGRWHLTLHLDSGRVADRPGAPHLTGLREIARIHTGDFRLTANQNLVIAGVTPEARDAIGALVTAHALDSFRSASPVRRNALACVALPTCGLAMAEAERYLPTFVGRLEDRLRAHGLQDANLLLRITGCPNGCARPYLAEVGLVGKAPGRYNLHLGGDARGQRLSHLYRENIDEDAILAALEPLFEGYARERQPGEGFGDFVVRAGHVPSPAVQPRPS.

4 residues coordinate [4Fe-4S] cluster: cysteine 428, cysteine 434, cysteine 473, and cysteine 477. Cysteine 477 contacts siroheme.

It belongs to the nitrite and sulfite reductase 4Fe-4S domain family. In terms of assembly, alpha(8)-beta(8). The alpha component is a flavoprotein, the beta component is a hemoprotein. Siroheme is required as a cofactor. It depends on [4Fe-4S] cluster as a cofactor.

It catalyses the reaction hydrogen sulfide + 3 NADP(+) + 3 H2O = sulfite + 3 NADPH + 4 H(+). It participates in sulfur metabolism; hydrogen sulfide biosynthesis; hydrogen sulfide from sulfite (NADPH route): step 1/1. Its function is as follows. Component of the sulfite reductase complex that catalyzes the 6-electron reduction of sulfite to sulfide. This is one of several activities required for the biosynthesis of L-cysteine from sulfate. The sequence is that of Sulfite reductase [NADPH] hemoprotein beta-component from Myxococcus xanthus (strain DK1622).